A 354-amino-acid polypeptide reads, in one-letter code: MRSFSKILAVASLAAIANSAVLKRDNNVLEVTLVAGENAVVHASVKNVGAEDLNLLSYGSLFDTAPVQKINVYEGETAVPFKGVLRAIQRTDLAPEVFHTLAAGETFETSFNAAEVHDLSTSTYTFVAEGAIPFAKAGSTEISDSIIFKSNAITVSVDGEAAKSVAKAIPSSIDRRTVLQSGCSTSQRSATTQALSYCASLARAASTAASSGSSTKFSEYFKTTSSSTRSVVAARLSAVASQCSSLTSGSTKYYCTDVYGYCESNVLAYTIPSTNEIVNCPIYYSALPALTGTCHAQDRATTTLHEFTHAPATYSPGTADNGYGYAAATALTSARAVLNADSYALYANAIYVGC.

The signal sequence occupies residues 1–19 (MRSFSKILAVASLAAIANS). Residues 20-179 (AVLKRDNNVL…PSSIDRRTVL (160 aa)) constitute a propeptide that is removed on maturation. 2 disulfides stabilise this stretch: Cys-183–Cys-255 and Cys-262–Cys-280. His-305 contacts Zn(2+). Glu-306 is a catalytic residue. Zn(2+) is bound by residues His-309 and Asp-320.

It belongs to the peptidase M35 family. Requires Zn(2+) as cofactor.

The protein localises to the secreted. The catalysed reaction is Preferential cleavage of bonds with hydrophobic residues in P1'. Also 3-Asn-|-Gln-4 and 8-Gly-|-Ser-9 bonds in insulin B chain.. Secreted metalloproteinase that allows assimilation of proteinaceous substrates. Shows high activities on basic nuclear substrates such as histone and protamine. The polypeptide is Neutral protease 2 homolog BCIN_12g06300 (Botryotinia fuckeliana (strain B05.10) (Noble rot fungus)).